We begin with the raw amino-acid sequence, 238 residues long: 1-(5-phosphoribosyl)-5-[(5-phosphoribosylamino)methylideneamino] imidazole-4-carboxamide isomerase (238 aa).

Asp-8 functions as the Proton acceptor in the catalytic mechanism. The active-site Proton donor is the Asp-130.

It belongs to the HisA/HisF family.

It localises to the cytoplasm. It carries out the reaction 1-(5-phospho-beta-D-ribosyl)-5-[(5-phospho-beta-D-ribosylamino)methylideneamino]imidazole-4-carboxamide = 5-[(5-phospho-1-deoxy-D-ribulos-1-ylimino)methylamino]-1-(5-phospho-beta-D-ribosyl)imidazole-4-carboxamide. It functions in the pathway amino-acid biosynthesis; L-histidine biosynthesis; L-histidine from 5-phospho-alpha-D-ribose 1-diphosphate: step 4/9. This Methanococcus vannielii (strain ATCC 35089 / DSM 1224 / JCM 13029 / OCM 148 / SB) protein is 1-(5-phosphoribosyl)-5-[(5-phosphoribosylamino)methylideneamino] imidazole-4-carboxamide isomerase.